The sequence spans 157 residues: Ribosome maturation factor RimM (157 aa).

The PRC barrel domain occupies 89–156 (PGEYYHVDLI…DRLLIDPEFV (68 aa)).

This sequence belongs to the RimM family. As to quaternary structure, binds ribosomal protein uS19.

It localises to the cytoplasm. Its function is as follows. An accessory protein needed during the final step in the assembly of 30S ribosomal subunit, possibly for assembly of the head region. Essential for efficient processing of 16S rRNA. May be needed both before and after RbfA during the maturation of 16S rRNA. It has affinity for free ribosomal 30S subunits but not for 70S ribosomes. In Rhizorhabdus wittichii (strain DSM 6014 / CCUG 31198 / JCM 15750 / NBRC 105917 / EY 4224 / RW1) (Sphingomonas wittichii), this protein is Ribosome maturation factor RimM.